The primary structure comprises 338 residues: Glycerol-3-phosphate dehydrogenase [NAD(P)+] (338 aa).

Residues Trp-20 and Lys-110 each contribute to the NADPH site. Sn-glycerol 3-phosphate contacts are provided by Lys-110, Gly-141, and Ser-143. Ala-145 provides a ligand contact to NADPH. Residues Lys-197, Asp-250, Ser-260, Arg-261, and Asn-262 each contribute to the sn-glycerol 3-phosphate site. Residue Lys-197 is the Proton acceptor of the active site. Arg-261 contributes to the NADPH binding site. Residue Glu-287 coordinates NADPH.

It belongs to the NAD-dependent glycerol-3-phosphate dehydrogenase family.

It is found in the cytoplasm. The catalysed reaction is sn-glycerol 3-phosphate + NAD(+) = dihydroxyacetone phosphate + NADH + H(+). The enzyme catalyses sn-glycerol 3-phosphate + NADP(+) = dihydroxyacetone phosphate + NADPH + H(+). Its pathway is membrane lipid metabolism; glycerophospholipid metabolism. In terms of biological role, catalyzes the reduction of the glycolytic intermediate dihydroxyacetone phosphate (DHAP) to sn-glycerol 3-phosphate (G3P), the key precursor for phospholipid synthesis. In Aster yellows witches'-broom phytoplasma (strain AYWB), this protein is Glycerol-3-phosphate dehydrogenase [NAD(P)+].